The primary structure comprises 415 residues: Multidrug resistance protein MdtA (415 aa).

The first 21 residues, M1–A21, serve as a signal peptide directing secretion. A compositionally biased stretch (polar residues) spans S34–P47. Disordered stretches follow at residues S34 to A60 and E392 to S415. The segment covering P399–S415 has biased composition (basic and acidic residues).

The protein belongs to the membrane fusion protein (MFP) (TC 8.A.1) family. Part of a tripartite efflux system composed of MdtA, MdtB and MdtC.

It localises to the cell inner membrane. In terms of biological role, the MdtABC tripartite complex confers resistance against novobiocin and deoxycholate. This chain is Multidrug resistance protein MdtA, found in Escherichia fergusonii (strain ATCC 35469 / DSM 13698 / CCUG 18766 / IAM 14443 / JCM 21226 / LMG 7866 / NBRC 102419 / NCTC 12128 / CDC 0568-73).